Consider the following 339-residue polypeptide: Ketol-acid reductoisomerase (NADP(+)) (339 aa).

The region spanning 1-182 is the KARI N-terminal Rossmann domain; the sequence is MRVYYDRDAD…GGGRSGIIET (182 aa). Residues 24–27, Lys48, Ser51, Thr53, and 83–86 contribute to the NADP(+) site; these read YGSQ and DELQ. Residue His108 is part of the active site. Gly134 serves as a coordination point for NADP(+). One can recognise a KARI C-terminal knotted domain in the interval 183-328; it reads NFREECETDL…AKLRGMMPWI (146 aa). The Mg(2+) site is built by Asp191, Glu195, Glu227, and Glu231. Ser252 lines the substrate pocket.

Belongs to the ketol-acid reductoisomerase family. Requires Mg(2+) as cofactor.

The enzyme catalyses (2R)-2,3-dihydroxy-3-methylbutanoate + NADP(+) = (2S)-2-acetolactate + NADPH + H(+). The catalysed reaction is (2R,3R)-2,3-dihydroxy-3-methylpentanoate + NADP(+) = (S)-2-ethyl-2-hydroxy-3-oxobutanoate + NADPH + H(+). It participates in amino-acid biosynthesis; L-isoleucine biosynthesis; L-isoleucine from 2-oxobutanoate: step 2/4. The protein operates within amino-acid biosynthesis; L-valine biosynthesis; L-valine from pyruvate: step 2/4. Functionally, involved in the biosynthesis of branched-chain amino acids (BCAA). Catalyzes an alkyl-migration followed by a ketol-acid reduction of (S)-2-acetolactate (S2AL) to yield (R)-2,3-dihydroxy-isovalerate. In the isomerase reaction, S2AL is rearranged via a Mg-dependent methyl migration to produce 3-hydroxy-3-methyl-2-ketobutyrate (HMKB). In the reductase reaction, this 2-ketoacid undergoes a metal-dependent reduction by NADPH to yield (R)-2,3-dihydroxy-isovalerate. This is Ketol-acid reductoisomerase (NADP(+)) from Rhizobium johnstonii (strain DSM 114642 / LMG 32736 / 3841) (Rhizobium leguminosarum bv. viciae).